The sequence spans 391 residues: Probable methanogen homoaconitase large subunit (391 aa).

The [4Fe-4S] cluster site is built by C275, C333, and C336.

The protein belongs to the aconitase/IPM isomerase family. LeuC type 2 subfamily. In terms of assembly, heterotetramer of 2 HacA and 2 HacB proteins.

The enzyme catalyses (2R)-homocitrate = (2R,3S)-homoisocitrate. The catalysed reaction is (2R)-homocitrate = cis-homoaconitate + H2O. It carries out the reaction (2R,3S)-homoisocitrate = cis-homoaconitate + H2O. It catalyses the reaction cis-(homo)2aconitate + H2O = (2R,3S)-iso(homo)2citrate. The enzyme catalyses cis-(homo)3aconitate + H2O = (2R,3S)-iso(homo)3citrate. The protein operates within organic acid metabolism; 2-oxosuberate biosynthesis. In terms of biological role, component of a hydro-lyase with broad substrate specificity for cis-unsaturated tricarboxylic acids. Catalyzes both the reversible dehydration of (R)-homocitrate ((R)-2-hydroxybutane-1,2,4-tricarboxylate) to produce cis-homoaconitate ((Z)-but-1-ene-1,2,4-tricarboxylate), and its hydration to homoisocitrate ((1R,2S)-1-hydroxybutane-1,2,4-tricarboxylate). Is also able to hydrate the analogous longer chain substrates cis-homo(2)-aconitate, cis-homo(3)-aconitate. These reactions are part of the biosynthesis pathway of coenzyme B. This Methanosarcina mazei (strain ATCC BAA-159 / DSM 3647 / Goe1 / Go1 / JCM 11833 / OCM 88) (Methanosarcina frisia) protein is Probable methanogen homoaconitase large subunit (hacA).